The following is a 195-amino-acid chain: U8 snoRNA-decapping enzyme (195 aa).

The region spanning 18 to 168 (GWRHACHALL…LENTFIGNAR (151 aa)) is the Nudix hydrolase domain. 3 residues coordinate substrate: His-24, Arg-50, and Phe-57. 4 residues coordinate Mn(2+): Gly-59, Glu-76, Glu-80, and His-99. The Nudix box motif lies at 61-82 (FVDLRDGSLEDGLNRELGEELG). Substrate-binding residues include Asn-166 and Gln-170. Residue Glu-173 participates in Mn(2+) binding.

This sequence belongs to the Nudix hydrolase family. NUDT16 subfamily. In terms of assembly, homodimer. Mg(2+) serves as cofactor. Requires Mn(2+) as cofactor. Co(2+) is required as a cofactor.

The protein localises to the nucleus. Its subcellular location is the nucleolus. It localises to the nucleoplasm. It is found in the cytoplasm. It catalyses the reaction a 5'-end (N(7)-methyl 5'-triphosphoguanosine)-ribonucleoside in mRNA + H2O = N(7)-methyl-GDP + a 5'-end phospho-ribonucleoside in mRNA + 2 H(+). The catalysed reaction is IDP + H2O = IMP + phosphate + H(+). It carries out the reaction dIDP + H2O = dIMP + phosphate + H(+). The enzyme catalyses a 5'-end NAD(+)-phospho-ribonucleoside in mRNA + H2O = a 5'-end phospho-ribonucleoside in mRNA + NAD(+) + H(+). It catalyses the reaction a 5'-end FAD-phospho-ribonucleoside in mRNA + H2O = a 5'-end phospho-adenosine-phospho-ribonucleoside in mRNA + FMN + 2 H(+). The catalysed reaction is a 5'-end CoA-ribonucleoside in mRNA + H2O = a 5'-end phospho-adenosine-phospho-ribonucleoside in mRNA + (R)-4'-phosphopantetheine + 2 H(+). In terms of biological role, RNA-binding and decapping enzyme that catalyzes the cleavage of the cap structure of snoRNAs and mRNAs in a metal-dependent manner. Part of the U8 snoRNP complex that is required for the accumulation of mature 5.8S and 28S rRNA. Has diphosphatase activity and removes m7G and/or m227G caps from U8 snoRNA and leaves a 5'monophosphate on the RNA. Also catalyzes the cleavage of the cap structure on mRNAs. Does not hydrolyze cap analog structures like 7-methylguanosine nucleoside triphosphate (m7GpppG). Also hydrolysis m7G- and m227G U3-capped RNAs but with less efficiencies. Has broad substrate specificity with manganese or cobalt as cofactor and can act on various RNA species. Binds to the U8 snoRNA; metal is not required for RNA-binding. May play a role in the regulation of snoRNAs and mRNAs degradation. Also acts as a phosphatase; hydrolyzes the non-canonical purine nucleotides inosine diphosphate (IDP) and deoxyinosine diphosphate (dITP) as well as guanosine diphosphate (GDP), deoxyguanosine diphosphate (dGDP), xanthine diphosphate (XDP), inosine triphosphate (ITP) and deoxyinosine triphosphate (ITP) to their respective monophosphate derivatives and does not distinguish between the deoxy- and ribose forms. The order of activity with different substrates is IDP &gt; dIDP &gt;&gt; GDP = dGDP &gt; XDP = ITP = dITP. Binds strongly to GTP, ITP and XTP. Participates in the hydrolysis of dIDP/IDP and probably excludes non-canonical purines from RNA and DNA precursor pools, thus preventing their incorporation into RNA and DNA and avoiding chromosomal lesions. Exhibits decapping activity towards NAD-capped RNAs and FAD-capped RNAs. Exhibits decapping activity towards dpCoA-capped RNAs in vitro. The polypeptide is U8 snoRNA-decapping enzyme (NUDT16) (Bos taurus (Bovine)).